The chain runs to 385 residues: uncharacterized protein (385 aa).

Zn(2+) contacts are provided by Asp180, His258, and His275.

The protein belongs to the iron-containing alcohol dehydrogenase family. Zn(2+) is required as a cofactor.

This is an uncharacterized protein from Synechocystis sp. (strain ATCC 27184 / PCC 6803 / Kazusa).